The following is a 2883-amino-acid chain: Desmoplakin (2883 aa).

The segment at 1-21 (MSCNGGSHPRINTLGRMTRAE) is disordered. Positions 1-596 (MSCNGGSHPR…DYMKTIEDLE (596 aa)) are interaction with PKP1, JUP, PKP2. Residues 1–1068 (MSCNGGSHPR…ANSENCNKNK (1068 aa)) are globular 1. Ser-22 carries the post-translational modification Phosphoserine. Residue Thr-59 is modified to Phosphothreonine. Ser-65 carries the post-translational modification Phosphoserine. Tyr-68 bears the Phosphotyrosine mark. Phosphothreonine is present on Thr-73. 3 positions are modified to phosphoserine: Ser-177, Ser-178, and Ser-188. 2 Spectrin repeats span residues 190–283 (SGWD…HLRQ) and 284–387 (LQNI…LKEN). Residues 388–458 (AAYFQFFEEA…NLVNKSKKIV (71 aa)) form a Spectrin 3a repeat. In terms of domain architecture, SH3 spans 470-527 (NKPIILRALCDYKQDQKIVHKGDECILKDNNERSKWYVTGPGGVDMLVPSVGLIIPPP). A Spectrin 3b repeat occupies 528–557 (NPLAVDLSCKIEQYYEAILALWNQLYINMK). 3 Spectrin repeats span residues 558-639 (SLVS…IQLP), 666-781 (VIET…SLCS), and 782-895 (VRAL…DLEK). Positions 1034 to 1956 (KSLEDLKLKN…LQKEIEKLRQ (923 aa)) form a coiled coil. Positions 1069 to 1957 (FLDQNLQKYQ…QKEIEKLRQR (889 aa)) are central fibrous rod domain. 3 positions are modified to phosphoserine: Ser-1670, Ser-1720, and Ser-2036. Residues 1958–2882 (PYGSHRETQT…YSFSSSSIGG (925 aa)) are globular 2. Residues 1972–2220 (TVDSSKLVFD…LLLSVQKRSM (249 aa)) form a 4.5 X 38 AA tandem repeats (Domain A) region. Plectin repeat units follow at residues 2021–2057 (QPFLRGAGAIAGASASPKEKYSLVEAKRKKFITPEST), 2058–2095 (VMLLEAQAATGGIIDPHRNEKLTVDNAVARDLIDFDDR), 2096–2133 (QQIYTAEKAITGFDDPFSGKTVSVSEAIKKNLIDRETG), 2134–2171 (MRLLEAQLASGGVVDPVNSVFLPKDVALARGLIDRDLY), 2175–2209 (NDPRDSQKNFVDPITKKKVSYMQLRERCRIEPHTG), 2210–2245 (LLLLSVQKRSMSFQGIRQPVTVTELVDSGILRPSTV), 2263–2300 (KDFLQGSSCIAGIYNETTKQKLGIYEAMKIGLVRPGTA), 2301–2338 (LELLEAQAATGFIVDPVSNLRLPVEEAYKRGLVGIEFK), 2339–2376 (EKLLSAERAVTGYNDPETGNIISLFQAMNKELIEKGHG), 2377–2414 (IRLLEAQIATGGIIDPKESHRLPVDMAYKRGYFNEELS), 2418–2452 (SDPSDDTKGFFDPNTEENLTYLQLKERCIKDEETG), 2468–2505 (SQKNTLRKRRVVIVDPETNKEMSVQEAYKKGLIDYDTF), 2519–2556 (TITGSDGSTRVVLVDRKTGSQYDIQDAIDKGLVDRKFF), 2622–2659 (SDPLEESSPIAAIFDTENLEKISIAEGIERGIVDSITG), 2660–2697 (QRLLEAQACTGGIIHPTTGQKLSLQDAVNQGLIDQDMA), 2736–2773 (QRFLEFQFLTGGLVDPEVHGRISTEEAIRKGFIDGRAA), and 2774–2811 (QRLQDISSYAKILTCPKTKLKISYKDAMNRSMVEDITG). Ser-2219, Ser-2221, and Ser-2237 each carry phosphoserine. The interval 2256–2458 (DEVGERIKDF…EETGLCLLPL (203 aa)) is 4.5 X 38 AA tandem repeats (Domain B). Gln-2492 is lipidated: Omega-hydroxyceramide glutamate ester. The interval 2621–2833 (LSDPLEESSP…GLPSPYNMSA (213 aa)) is 4.5 X 38 AA tandem repeats (Domain C). Residues Ser-2822 and Ser-2827 each carry the phosphoserine modification. Residues 2822 to 2883 (SKGLPSPYNM…SFSSSSIGGY (62 aa)) form a disordered region. Phosphotyrosine is present on Tyr-2829. Ser-2832 and Ser-2836 each carry phosphoserine. Residues 2835–2858 (GSRSGSRSGSRSGSRSGSRSGSRR) are 6 X 4 AA tandem repeats of G-S-R-[SR]. Low complexity predominate over residues 2835-2858 (GSRSGSRSGSRSGSRSGSRSGSRR). Omega-N-methylarginine is present on residues Arg-2837 and Arg-2858. The residue at position 2860 (Ser-2860) is a Phosphoserine. At Thr-2864 the chain carries Phosphothreonine. A compositionally biased stretch (low complexity) spans 2867–2883 (SSYSYSYSFSSSSIGGY). Position 2879 is a phosphoserine (Ser-2879).

Belongs to the plakin or cytolinker family. As to quaternary structure, homodimer. Interacts with COL17A1 (via cytoplasmic region). Interacts with DSC2. Interacts with PKP1. Interacts with PKP2. Interacts weakly with TMEM65. Post-translationally, phosphorylation at Ser-2860 increases association with intermediate filament cytokeratin, potentially facilitating interaction between desmosome junctions and intermediate filament architecture. As to expression, expressed in undifferentiated keratinocytes of the epidermis at birth, expression increases as differentiation proceeds (at protein level). Abundantly expressed in the suprabasal layers and weakly in the basal layers of the outer hair root sheath (at protein level). Expressed at intercalated disks in cardiomyocytes (at protein level).

The protein localises to the cell junction. The protein resides in the desmosome. It localises to the cell membrane. It is found in the cytoplasm. Its function is as follows. Major high molecular weight protein of desmosomes. Regulates profibrotic gene expression in cardiomyocytes via activation of the MAPK14/p38 MAPK signaling cascade and increase in TGFB1 protein abundance. The protein is Desmoplakin of Mus musculus (Mouse).